The sequence spans 311 residues: Protease HtpX homolog 1 (311 aa).

The next 2 helical transmembrane spans lie at 12 to 32 (IIAL…IINF) and 35 to 55 (FPVI…WLIS). H137 contacts Zn(2+). E138 is a catalytic residue. H141 contacts Zn(2+). 2 helical membrane passes run 159 to 179 (ILGF…IFAV) and 184 to 204 (ILVG…TFFL). Residue E216 participates in Zn(2+) binding.

It belongs to the peptidase M48B family. Zn(2+) serves as cofactor.

It is found in the cell membrane. This is Protease HtpX homolog 1 from Sulfurisphaera tokodaii (strain DSM 16993 / JCM 10545 / NBRC 100140 / 7) (Sulfolobus tokodaii).